Reading from the N-terminus, the 361-residue chain is Alanine racemase 2 (361 aa).

K30 (proton acceptor; specific for D-alanine) is an active-site residue. K30 carries the post-translational modification N6-(pyridoxal phosphate)lysine. R122 lines the substrate pocket. The Proton acceptor; specific for L-alanine role is filled by Y256. Residue M303 coordinates substrate.

This sequence belongs to the alanine racemase family. Requires pyridoxal 5'-phosphate as cofactor.

It catalyses the reaction L-alanine = D-alanine. It functions in the pathway amino-acid biosynthesis; D-alanine biosynthesis; D-alanine from L-alanine: step 1/1. In terms of biological role, catalyzes the interconversion of L-alanine and D-alanine. May also act on other amino acids. This is Alanine racemase 2 (alr2) from Staphylococcus aureus (strain COL).